Here is a 129-residue protein sequence, read N- to C-terminus: 8-oxo-dGTP diphosphatase (129 aa).

Positions 1–129 (MKKLQIAVGI…EPVIAKLKRL (129 aa)) constitute a Nudix hydrolase domain. 8-oxo-dGTP-binding positions include Arg23, His28, and 34 to 37 (EFPG). Mg(2+) contacts are provided by Gly37 and Glu57. A Nudix box motif is present at residues 38 to 59 (GKIEMGETPEQAVVRELQEEVG). Asn119 serves as a coordination point for 8-oxo-dGTP.

It belongs to the Nudix hydrolase family. As to quaternary structure, monomer. Mg(2+) serves as cofactor.

The catalysed reaction is 8-oxo-dGTP + H2O = 8-oxo-dGMP + diphosphate + H(+). It catalyses the reaction 8-oxo-GTP + H2O = 8-oxo-GMP + diphosphate + H(+). The enzyme catalyses 8-oxo-dGDP + H2O = 8-oxo-dGMP + phosphate + H(+). It carries out the reaction 8-oxo-GDP + H2O = 8-oxo-GMP + phosphate + H(+). Its function is as follows. Specifically hydrolyzes both 8-oxo-deoxyguanosine triphosphate (8-oxo-dGTP) and 8-oxo-guanosine triphosphate (8-oxo-GTP) to the related monophosphates, thereby cleaning up the nucleotide pools and preventing misincorporation of 8-oxoGua into DNA and RNA. It prevents replicational errors by removing an oxidatively damaged form of guanine (8-oxo-dGTP) from DNA and the nucleotide pool. 8-oxo-dGTP can be inserted opposite dA and dC residues of template DNA with almost equal efficiency thus leading to A.T to G.C transversions. MutT may also ensure transcriptional fidelity, removing 8-oxo-GTP from the ribonucleotide triphosphate pool. However, due to the lower efficiency of RNA polymerase 8-oxo-GTP incorporation, MutT is probably not a major contributor to transcriptional fidelity. It also hydrolyzes 8-oxo-dGDP and 8-oxo-GDP to their monophosphate form. In vitro, can also use dGTP, dGDP and other various nucleoside di- and triphosphates, with much lower efficiency. Works cooperatively with MutM and MutY to prevent accumulation in the DNA of oxidized guanine residues. The protein is 8-oxo-dGTP diphosphatase of Escherichia coli (strain K12).